A 125-amino-acid chain; its full sequence is Fluoride-specific ion channel FluC (125 aa).

3 consecutive transmembrane segments (helical) span residues 36–56 (GTIFVNVVGSFLLSFLMFLSI), 65–85 (FILFFGTGFLGAFTTFSTFAY), and 99–119 (IIYFIANIFLGFFAAILGMFL). Na(+)-binding residues include G75 and T78.

It belongs to the fluoride channel Fluc/FEX (TC 1.A.43) family.

It localises to the cell inner membrane. The enzyme catalyses fluoride(in) = fluoride(out). Na(+) is not transported, but it plays an essential structural role and its presence is essential for fluoride channel function. Functionally, fluoride-specific ion channel. Important for reducing fluoride concentration in the cell, thus reducing its toxicity. The sequence is that of Fluoride-specific ion channel FluC from Thermosipho africanus (strain TCF52B).